We begin with the raw amino-acid sequence, 619 residues long: Dihydroxy-acid dehydratase (619 aa).

Asp81 lines the Mg(2+) pocket. Cys122 contributes to the [2Fe-2S] cluster binding site. The Mg(2+) site is built by Asp123 and Lys124. Lys124 is modified (N6-carboxylysine). Position 195 (Cys195) interacts with [2Fe-2S] cluster. Residue Glu494 participates in Mg(2+) binding. The Proton acceptor role is filled by Ser520.

This sequence belongs to the IlvD/Edd family. As to quaternary structure, homodimer. [2Fe-2S] cluster is required as a cofactor. It depends on Mg(2+) as a cofactor.

It carries out the reaction (2R)-2,3-dihydroxy-3-methylbutanoate = 3-methyl-2-oxobutanoate + H2O. It catalyses the reaction (2R,3R)-2,3-dihydroxy-3-methylpentanoate = (S)-3-methyl-2-oxopentanoate + H2O. It functions in the pathway amino-acid biosynthesis; L-isoleucine biosynthesis; L-isoleucine from 2-oxobutanoate: step 3/4. The protein operates within amino-acid biosynthesis; L-valine biosynthesis; L-valine from pyruvate: step 3/4. Its function is as follows. Functions in the biosynthesis of branched-chain amino acids. Catalyzes the dehydration of (2R,3R)-2,3-dihydroxy-3-methylpentanoate (2,3-dihydroxy-3-methylvalerate) into 2-oxo-3-methylpentanoate (2-oxo-3-methylvalerate) and of (2R)-2,3-dihydroxy-3-methylbutanoate (2,3-dihydroxyisovalerate) into 2-oxo-3-methylbutanoate (2-oxoisovalerate), the penultimate precursor to L-isoleucine and L-valine, respectively. This is Dihydroxy-acid dehydratase from Shewanella sp. (strain MR-4).